The following is a 69-amino-acid chain: DNA gyrase inhibitor YacG (69 aa).

Residues C14, C17, C33, and C37 each coordinate Zn(2+). The segment at 46–69 (ADEEKSIPGAPDMSDSDGWSEDQY) is disordered. Residues 59-69 (SDSDGWSEDQY) are compositionally biased toward acidic residues.

It belongs to the DNA gyrase inhibitor YacG family. As to quaternary structure, interacts with GyrB. Zn(2+) is required as a cofactor.

Inhibits all the catalytic activities of DNA gyrase by preventing its interaction with DNA. Acts by binding directly to the C-terminal domain of GyrB, which probably disrupts DNA binding by the gyrase. The polypeptide is DNA gyrase inhibitor YacG (Aliivibrio fischeri (strain MJ11) (Vibrio fischeri)).